A 255-amino-acid chain; its full sequence is Taurine import ATP-binding protein TauB (255 aa).

The 228-residue stretch at 2–229 (LNVSGLWAEY…RYAEGEPCRA (228 aa)) folds into the ABC transporter domain. 34-41 (GPSGCGKT) is a binding site for ATP.

Belongs to the ABC transporter superfamily. Taurine importer (TC 3.A.1.17.1) family. In terms of assembly, the complex is composed of two ATP-binding proteins (TauB), two transmembrane proteins (TauC) and a solute-binding protein (TauA).

It localises to the cell inner membrane. The catalysed reaction is taurine(out) + ATP + H2O = taurine(in) + ADP + phosphate + H(+). Its function is as follows. Part of the ABC transporter complex TauABC involved in taurine import. Responsible for energy coupling to the transport system. The chain is Taurine import ATP-binding protein TauB from Yersinia pseudotuberculosis serotype I (strain IP32953).